Reading from the N-terminus, the 67-residue chain is MKEVNIDTLISKIPNKYVLTVVISKRARQLFEELKFLKTIARDPLILAMEEIAQEKIAYGEGDDLED.

It belongs to the RNA polymerase subunit omega family. In terms of assembly, the RNAP catalytic core consists of 2 alpha, 1 beta, 1 beta' and 1 omega subunit. When a sigma factor is associated with the core the holoenzyme is formed, which can initiate transcription.

It catalyses the reaction RNA(n) + a ribonucleoside 5'-triphosphate = RNA(n+1) + diphosphate. Its function is as follows. Promotes RNA polymerase assembly. Latches the N- and C-terminal regions of the beta' subunit thereby facilitating its interaction with the beta and alpha subunits. This is DNA-directed RNA polymerase subunit omega from Dictyoglomus turgidum (strain DSM 6724 / Z-1310).